A 199-amino-acid polypeptide reads, in one-letter code: N-(5'-phosphoribosyl)anthranilate isomerase (199 aa).

This sequence belongs to the TrpF family.

It carries out the reaction N-(5-phospho-beta-D-ribosyl)anthranilate = 1-(2-carboxyphenylamino)-1-deoxy-D-ribulose 5-phosphate. It participates in amino-acid biosynthesis; L-tryptophan biosynthesis; L-tryptophan from chorismate: step 3/5. In Streptococcus pneumoniae (strain Taiwan19F-14), this protein is N-(5'-phosphoribosyl)anthranilate isomerase.